Reading from the N-terminus, the 118-residue chain is Acidic phospholipase A2 PA-3 (118 aa).

7 disulfide bridges follow: cysteine 11–cysteine 71, cysteine 27–cysteine 117, cysteine 29–cysteine 45, cysteine 44–cysteine 98, cysteine 51–cysteine 91, cysteine 60–cysteine 84, and cysteine 78–cysteine 89. The Ca(2+) site is built by tyrosine 28, glycine 30, and glycine 32. Residue histidine 48 is part of the active site. Position 49 (aspartate 49) interacts with Ca(2+). The active site involves aspartate 92.

Belongs to the phospholipase A2 family. Group I subfamily. D49 sub-subfamily. It depends on Ca(2+) as a cofactor. Expressed by the venom gland.

It is found in the secreted. The catalysed reaction is a 1,2-diacyl-sn-glycero-3-phosphocholine + H2O = a 1-acyl-sn-glycero-3-phosphocholine + a fatty acid + H(+). PLA2 catalyzes the calcium-dependent hydrolysis of the 2-acyl groups in 3-sn-phosphoglycerides. This is Acidic phospholipase A2 PA-3 from Pseudechis australis (Mulga snake).